We begin with the raw amino-acid sequence, 82 residues long: MDNKERNTLYQVVYAISGVTGEDGDELVETFKQGPMEVDKRDFFEIVQRVESLFDCTLDMNLEGPYLIHADEIVTKITKLNV.

As to quaternary structure, homotetramer.

It carries out the reaction 4-(gamma-L-glutamylamino)butanoyl-[BtrI ACP] + FMNH2 + O2 = 4-(gamma-L-glutamylamino)-(2S)-2-hydroxybutanoyl-[BtrI ACP] + FMN + H2O + H(+). The protein operates within antibiotic biosynthesis; butirosin biosynthesis. Its function is as follows. NAD(P)H:FMN oxidoreductase component of a two-component system involved in the biosynthesis of the side chain of the aminoglycoside antibiotics in the biosynthetic pathway of butirosin. Together with BtrO, mediates hydroxylation of gamma-L-Glu-GABA-S-BtrI. This is 4-(gamma-L-glutamylamino)butanoyl-[BtrI acyl-carrier protein] monooxygenase BtrO (btrV) from Niallia circulans (Bacillus circulans).